The sequence spans 101 residues: NAD(P)H-quinone oxidoreductase subunit 4L, chloroplastic (101 aa).

3 consecutive transmembrane segments (helical) span residues 2-22, 32-52, and 61-81; these read ILEHVLVLSAYLFSIGIYGLI, MCLELILNAVNINFVTFSDFF, and IFSIFVIAIAAAEAAIGPAIL.

The protein belongs to the complex I subunit 4L family. In terms of assembly, NDH is composed of at least 16 different subunits, 5 of which are encoded in the nucleus.

It is found in the plastid. It localises to the chloroplast thylakoid membrane. The enzyme catalyses a plastoquinone + NADH + (n+1) H(+)(in) = a plastoquinol + NAD(+) + n H(+)(out). The catalysed reaction is a plastoquinone + NADPH + (n+1) H(+)(in) = a plastoquinol + NADP(+) + n H(+)(out). Functionally, NDH shuttles electrons from NAD(P)H:plastoquinone, via FMN and iron-sulfur (Fe-S) centers, to quinones in the photosynthetic chain and possibly in a chloroplast respiratory chain. The immediate electron acceptor for the enzyme in this species is believed to be plastoquinone. Couples the redox reaction to proton translocation, and thus conserves the redox energy in a proton gradient. This chain is NAD(P)H-quinone oxidoreductase subunit 4L, chloroplastic, found in Platanus occidentalis (Sycamore).